We begin with the raw amino-acid sequence, 301 residues long: Probable alpha-L-glutamate ligase 1 (301 aa).

Residues 104 to 287 (LQLLSRKNIG…VAEKIIQFIE (184 aa)) enclose the ATP-grasp domain. Residues K141, 178 to 179 (EY), D187, and 211 to 213 (RSN) each bind ATP. Mg(2+) contacts are provided by D248, E260, and N262. Mn(2+) is bound by residues D248, E260, and N262.

It belongs to the RimK family. Requires Mg(2+) as cofactor. Mn(2+) is required as a cofactor.

This Shewanella frigidimarina (strain NCIMB 400) protein is Probable alpha-L-glutamate ligase 1.